A 305-amino-acid polypeptide reads, in one-letter code: Target of rapamycin complex subunit LST8-1 (305 aa).

7 WD repeats span residues 1–30 (MSQP…CYRT), 33–71 (YPDS…PQPV), 76–115 (SHTN…CQKE), 117–156 (ESVA…CSCE), 160–199 (EVDT…QTMT), 209–248 (AHNG…LEKV), and 251–292 (GHQR…KVYQ).

It belongs to the WD repeat LST8 family. In terms of assembly, the target of rapamycin complex 1 (TORC1) is composed of at least RAPTOR, LST8 and TOR. Interacts with TOR. In terms of tissue distribution, expressed in the root central cylinder, root tips, emerging lateral roots, vasculature of cotyledons, leaf stomata, leaf stipules, anthers, pollen, filaments, and vasculature of petals and sepals.

The protein localises to the endosome. In terms of biological role, component of TORC1 complex, which is an essential cell growth regulator that controls plant development. Acts by activating transcription, protein synthesis and ribosome biogenesis, and inhibiting mRNA degradation and autophagy. Involved in regulating amino acid accumulation and the synthesis of myo-inositol and raffinose during plant adaptation to long days. Involved in the regulation of plant growth and abscisic acid (ABA) accumulation. Acts as a positive regulation of the ABA biosynthetic genes ZEP, NCED3 and AAO3, and negative regulator of the ABA catabolic genes CYP707A2 and CYP707A3. The chain is Target of rapamycin complex subunit LST8-1 from Arabidopsis thaliana (Mouse-ear cress).